The sequence spans 293 residues: Ribosomal protein L11 methyltransferase (293 aa).

Thr145, Gly166, Asp188, and Asn230 together coordinate S-adenosyl-L-methionine.

It belongs to the methyltransferase superfamily. PrmA family.

It is found in the cytoplasm. It carries out the reaction L-lysyl-[protein] + 3 S-adenosyl-L-methionine = N(6),N(6),N(6)-trimethyl-L-lysyl-[protein] + 3 S-adenosyl-L-homocysteine + 3 H(+). Its function is as follows. Methylates ribosomal protein L11. This chain is Ribosomal protein L11 methyltransferase, found in Escherichia coli (strain SMS-3-5 / SECEC).